A 206-amino-acid polypeptide reads, in one-letter code: Ribosomal RNA small subunit methyltransferase G (206 aa).

Residues Gly-73, Leu-78, 124–125, and Arg-139 each bind S-adenosyl-L-methionine; that span reads VE.

It belongs to the methyltransferase superfamily. RNA methyltransferase RsmG family.

The protein localises to the cytoplasm. The catalysed reaction is guanosine(527) in 16S rRNA + S-adenosyl-L-methionine = N(7)-methylguanosine(527) in 16S rRNA + S-adenosyl-L-homocysteine. In terms of biological role, specifically methylates the N7 position of guanine in position 527 of 16S rRNA. The sequence is that of Ribosomal RNA small subunit methyltransferase G from Photorhabdus laumondii subsp. laumondii (strain DSM 15139 / CIP 105565 / TT01) (Photorhabdus luminescens subsp. laumondii).